The chain runs to 333 residues: Protein FLAP1 homolog A (333 aa).

Residues 26-46 (VVIIFVLAFTLVFTPTFEAEA) form a helical membrane-spanning segment. A disordered region spans residues 53-74 (IGGGSFRAPSAPSRSYSGPSGG). The span at 58 to 70 (FRAPSAPSRSYSG) shows a compositional bias: low complexity. A run of 2 helical transmembrane segments spans residues 92 to 112 (IIPF…LVMI) and 261 to 281 (GEYI…LPAV).

This sequence belongs to the FLAP family.

It localises to the cellular thylakoid membrane. Its subcellular location is the cell inner membrane. In terms of biological role, essential for photosynthetic growth under fluctuating light by modulating PxcA- and PxcL-dependent intracellular pH regulation via proton transport (e.g. transient pH reduction upon transition from dark to light followed by an increase in the light until light-to-dark shift). This is Protein FLAP1 homolog A from Synechocystis sp. (strain ATCC 27184 / PCC 6803 / Kazusa).